A 427-amino-acid polypeptide reads, in one-letter code: Trigger factor (427 aa).

The 81-residue stretch at 160–240 folds into the PPIase FKBP-type domain; that stretch reads TDTVIGDVEK…VKEVKRLELP (81 aa).

The protein belongs to the FKBP-type PPIase family. Tig subfamily.

Its subcellular location is the cytoplasm. It carries out the reaction [protein]-peptidylproline (omega=180) = [protein]-peptidylproline (omega=0). Functionally, involved in protein export. Acts as a chaperone by maintaining the newly synthesized protein in an open conformation. Functions as a peptidyl-prolyl cis-trans isomerase. This Chlorobium phaeobacteroides (strain DSM 266 / SMG 266 / 2430) protein is Trigger factor.